Here is a 338-residue protein sequence, read N- to C-terminus: Lipoate-protein ligase A (338 aa).

One can recognise a BPL/LPL catalytic domain in the interval 29–216 (PATQRVLFLW…AFFAHYGERV (188 aa)). ATP is bound by residues R71, 76 to 79 (GAVF), and K134. K134 contacts (R)-lipoate.

The protein belongs to the LplA family. As to quaternary structure, monomer.

The protein resides in the cytoplasm. The enzyme catalyses L-lysyl-[lipoyl-carrier protein] + (R)-lipoate + ATP = N(6)-[(R)-lipoyl]-L-lysyl-[lipoyl-carrier protein] + AMP + diphosphate + H(+). Its pathway is protein modification; protein lipoylation via exogenous pathway; protein N(6)-(lipoyl)lysine from lipoate: step 1/2. The protein operates within protein modification; protein lipoylation via exogenous pathway; protein N(6)-(lipoyl)lysine from lipoate: step 2/2. In terms of biological role, catalyzes both the ATP-dependent activation of exogenously supplied lipoate to lipoyl-AMP and the transfer of the activated lipoyl onto the lipoyl domains of lipoate-dependent enzymes. The polypeptide is Lipoate-protein ligase A (Salmonella schwarzengrund (strain CVM19633)).